Here is a 354-residue protein sequence, read N- to C-terminus: MISKFIEKRMLNMLDEWYSAMSKRKMNHVCTLKEKIDQHLPKIKKNTKLWMRYQLFQARHQLLFENQNGLDSLFDGLYGLEDKMDDELKYYLYFFSGLYEMVKTAPKHAVHHFKKAEQYLAAIHNTFEAADLYYQTAGAYYLMKSPPLSVQYVKKALHIYLHQFGYIKKVITCKLLLAVNYIDQERYEKAEQLFKEIIKKTQQLHDENLLCHAYYNLGFLKATEKKDQEALLYFRKVLKNQEFEMNSPVSYLHCVYESVRALFKTGNITEAKAVLQKGKELSEKVDIQTIYLKLKTLEALYTSAEDPYEQLLEYVLELEKIEAWVDLEVLLEDITEYYKKKDDFEKAAFFIMRG.

6 TPR repeats span residues 64–105, 107–126, 130–163, 171–204, 211–244, and 321–353; these read FENQ…VKTA, KHAVHHFKKAEQYLAAIHNT, ADLYYQTAGAYYLMKSPPLSVQYVKKALHIYLHQ, ITCKLLLAVNYIDQERYEKAEQLFKEIIKKTQQL, CHAYYNLGFLKATEKKDQEALLYFRKVLKNQEFE, and IEAWVDLEVLLEDITEYYKKKDDFEKAAFFIMR.

This sequence belongs to the Rap family.

Its subcellular location is the cytoplasm. The protein is Regulatory protein RapD (rapD) of Bacillus subtilis (strain 168).